A 303-amino-acid chain; its full sequence is Protein bottleneck (303 aa).

Disordered regions lie at residues 102–142 (SKRN…PTVT) and 185–272 (VATT…ASVR). Low complexity-rich tracts occupy residues 115 to 138 (RQQE…QQQE) and 185 to 197 (VATT…TANS). Residues 260-272 (ATISRQSSSASVR) show a composition bias toward polar residues.

As to expression, restricted to the blastoderm.

The protein localises to the cytoplasm. It localises to the cytoskeleton. Acts as a regulator of the microfilament network governing cellularization of the embryo. Determines the timing of a key conformational transition in the cortical microfilament network: the proper coordination of membrane invagination and basal closure of the cells. To do this, bnk possibly physically links neighboring contractile units of the early cycle 14 microfilament network in a manner that prevents basal constriction until the proper stage has been reached. Bnk together with nullo and Sry-alpha may provide auxiliary functions, by acting both to stabilize a large and dynamic microfilament structure and regulate its functions. The sequence is that of Protein bottleneck (bnk) from Drosophila melanogaster (Fruit fly).